Consider the following 118-residue polypeptide: Probable dihydroneopterin aldolase (118 aa).

Substrate-binding positions include E21, Y53, and 72 to 73 (IE). Catalysis depends on K98, which acts as the Proton donor/acceptor.

This sequence belongs to the DHNA family.

The catalysed reaction is 7,8-dihydroneopterin = 6-hydroxymethyl-7,8-dihydropterin + glycolaldehyde. It functions in the pathway cofactor biosynthesis; tetrahydrofolate biosynthesis; 2-amino-4-hydroxy-6-hydroxymethyl-7,8-dihydropteridine diphosphate from 7,8-dihydroneopterin triphosphate: step 3/4. Its function is as follows. Catalyzes the conversion of 7,8-dihydroneopterin to 6-hydroxymethyl-7,8-dihydropterin. This is Probable dihydroneopterin aldolase (folB) from Synechocystis sp. (strain ATCC 27184 / PCC 6803 / Kazusa).